The chain runs to 383 residues: S-adenosylmethionine synthase (383 aa).

An ATP-binding site is contributed by H15. D17 lines the Mg(2+) pocket. Position 43 (E43) interacts with K(+). The L-methionine site is built by E56 and Q99. The interval 99–109 (QSQDINQGVDR) is flexible loop. ATP contacts are provided by residues 164–166 (DAK), 230–231 (RF), D239, 245–246 (RK), A262, and K266. D239 provides a ligand contact to L-methionine. L-methionine is bound at residue K270.

This sequence belongs to the AdoMet synthase family. As to quaternary structure, homotetramer; dimer of dimers. Requires Mg(2+) as cofactor. It depends on K(+) as a cofactor.

The protein localises to the cytoplasm. It carries out the reaction L-methionine + ATP + H2O = S-adenosyl-L-methionine + phosphate + diphosphate. It functions in the pathway amino-acid biosynthesis; S-adenosyl-L-methionine biosynthesis; S-adenosyl-L-methionine from L-methionine: step 1/1. Catalyzes the formation of S-adenosylmethionine (AdoMet) from methionine and ATP. The overall synthetic reaction is composed of two sequential steps, AdoMet formation and the subsequent tripolyphosphate hydrolysis which occurs prior to release of AdoMet from the enzyme. In Actinobacillus succinogenes (strain ATCC 55618 / DSM 22257 / CCUG 43843 / 130Z), this protein is S-adenosylmethionine synthase.